The following is a 313-amino-acid chain: Mitochondrial uncoupling protein 4 (313 aa).

3 Solcar repeats span residues 4–115 (KSFV…LKNK), 124–215 (LNLS…FKEG), and 224–309 (DGLG…VRKL). The next 6 helical transmembrane spans lie at 6 to 26 (FVEG…LDLI), 84 to 104 (AAAL…YSTT), 130 to 150 (IGAG…ADVA), 189 to 209 (RGSA…LASY), 230 to 250 (VVAS…VDVI), and 282 to 302 (YKGF…LFVT).

Belongs to the mitochondrial carrier (TC 2.A.29) family. Expressed in roots, leaves, stems and flowers.

It localises to the mitochondrion inner membrane. In terms of biological role, PUMPS are mitochondrial transporter proteins that create proton leaks across the inner mitochondrial membrane, thus uncoupling oxidative phosphorylation. This leads to a decrease in the efficiency of oxidative phosphorylation and an increase in heat production. May be involved in protecting plant cells against oxidative stress damage. Recombinant PUMP4, reconstituted into liposomes, transports a wide range of dicarboxylic acids including malate, oxaloacetate and succinate as well as phosphate, sulfate and thiosulfate. However, it is unknown if these transports are of any biological significance in vivo. This is Mitochondrial uncoupling protein 4 (PUMP4) from Arabidopsis thaliana (Mouse-ear cress).